Here is a 108-residue protein sequence, read N- to C-terminus: DNA-directed RNA polymerase subunit omega (108 aa).

This sequence belongs to the RNA polymerase subunit omega family. In terms of assembly, the RNAP catalytic core consists of 2 alpha, 1 beta, 1 beta' and 1 omega subunit. When a sigma factor is associated with the core the holoenzyme is formed, which can initiate transcription.

The catalysed reaction is RNA(n) + a ribonucleoside 5'-triphosphate = RNA(n+1) + diphosphate. Its function is as follows. Promotes RNA polymerase assembly. Latches the N- and C-terminal regions of the beta' subunit thereby facilitating its interaction with the beta and alpha subunits. The chain is DNA-directed RNA polymerase subunit omega from Mycolicibacterium paratuberculosis (strain ATCC BAA-968 / K-10) (Mycobacterium paratuberculosis).